The primary structure comprises 94 residues: C-X-C motif chemokine 11-1 (94 aa).

The N-terminal stretch at 1–19 (MKTVTALLLVSLAVVAIEG) is a signal peptide. 2 cysteine pairs are disulfide-bonded: Cys27–Cys54 and Cys29–Cys71.

The protein belongs to the intercrine alpha (chemokine CxC) family.

The protein resides in the secreted. Its function is as follows. Ligand for cxcr3.2. Chemotactic for macrophages. The chain is C-X-C motif chemokine 11-1 (cxcl11.1) from Danio rerio (Zebrafish).